The sequence spans 196 residues: uncharacterized protein (196 aa).

FAD contacts are provided by residues 15 to 22 (SQGKFNKT), 68 to 71 (GWWM), Tyr-107, and 123 to 126 (TWNA).

This sequence belongs to the oxidoreductase MdaB family. FAD is required as a cofactor.

This is an uncharacterized protein from Schizosaccharomyces pombe (strain 972 / ATCC 24843) (Fission yeast).